The chain runs to 246 residues: Homeobox protein Crxos (246 aa).

DNA-binding regions (homeobox) lie at residues 22–72 (WEQL…EMRP) and 129–182 (ELTD…RGYR). A Nuclear localization signal motif is present at residues 163 to 177 (RKDLIRSWFITQRHR).

The protein belongs to the paired homeobox family. Specifically expressed during the preimplantation stages of embryonic development, between the four-cell to eight-cell stage and the morula stage. Expressed in adult testis. As to expression, detected in early embryos; expression decreases gradually with embryonic development. Also expressed in extraembryonic tissues after E14.5, expression level increases drastically until E18.5, immediately before partum.

It localises to the nucleus. In terms of biological role, transcription factor that acts as a regulator of embryonic stem cell differentiation during the preimplantation stages of embryonic development. Transcription factor that acts as a positive regulator of embryonic stem cell differentiation. Functionally, transcription factor that promotes embryonic stem cell pluripotency. Its function is as follows. Transcription factor that promotes embryonic stem cell pluripotency. Also involved in extraembryonic tissues development by promoting the expression of placental prolactin family genes. This Mus musculus (Mouse) protein is Homeobox protein Crxos.